Reading from the N-terminus, the 190-residue chain is Cancer-related nucleoside-triphosphatase homolog (190 aa).

The residue at position 2 (Ala-2) is an N-acetylalanine. ATP contacts are provided by residues 9 to 16 (GPPGVGKT) and 109 to 116 (ICVIDEVG). Lys-165 carries the post-translational modification N6-acetyllysine.

It belongs to the THEP1 NTPase family. Monomer.

It catalyses the reaction a ribonucleoside 5'-triphosphate + H2O = a ribonucleoside 5'-diphosphate + phosphate + H(+). It carries out the reaction 5-methyl-UTP + H2O = 5-methyl-UDP + phosphate + H(+). The enzyme catalyses CTP + H2O = CDP + phosphate + H(+). The catalysed reaction is ATP + H2O = ADP + phosphate + H(+). It catalyses the reaction GTP + H2O = GDP + phosphate + H(+). Its function is as follows. Has nucleotide phosphatase activity towards ATP, GTP, CTP, TTP and UTP. Hydrolyzes nucleoside diphosphates with lower efficiency. This is Cancer-related nucleoside-triphosphatase homolog (NTPCR) from Bos taurus (Bovine).